A 640-amino-acid polypeptide reads, in one-letter code: ATP-dependent rRNA helicase spb4 (640 aa).

Residues 14-42 (WDAVTPALSEWVLEAMSSMGFTRMTPVQA) carry the Q motif motif. The Helicase ATP-binding domain occupies 45-249 (IPLFMAHKDV…RVGLRNPVKV (205 aa)). 58–65 (AVTGSGKT) contributes to the ATP binding site. Residues 197-200 (DEAD) carry the DEAD box motif. The 155-residue stretch at 283–437 (ALKRILSSVQ…LITFSDADAA (155 aa)) folds into the Helicase C-terminal domain. Residues 521–629 (AYKDKQREKR…AAKAAGAKAD (109 aa)) adopt a coiled-coil conformation. Disordered regions lie at residues 531–595 (RKEL…EKQK) and 607–640 (RKKN…QGFD). Over residues 568-582 (KKLKRREQKKSKHEK) the composition is skewed to basic residues. Residues 583 to 595 (ARWEKMTEEEKQK) are compositionally biased toward basic and acidic residues. Positions 630 to 640 (GDDEEEFQGFD) are enriched in acidic residues.

This sequence belongs to the DEAD box helicase family. DDX55/SPB4 subfamily. As to quaternary structure, component of pre-60S ribosomal complexes.

It localises to the nucleus. The protein resides in the nucleolus. It carries out the reaction ATP + H2O = ADP + phosphate + H(+). ATP-binding RNA helicase involved in the biogenesis of 60S ribosomal subunits. Binds 90S pre-ribosomal particles and dissociates from pre-60S ribosomal particles after processing of 27SB pre-rRNA. Required for the normal formation of 18S rRNA through the processing of pre-rRNAs at sites A0, A1 and A2, and the normal formation of 25S and 5.8S rRNAs through the processing of pre-rRNAs at sites C1 and C2. The polypeptide is ATP-dependent rRNA helicase spb4 (Neosartorya fischeri (strain ATCC 1020 / DSM 3700 / CBS 544.65 / FGSC A1164 / JCM 1740 / NRRL 181 / WB 181) (Aspergillus fischerianus)).